The sequence spans 402 residues: Tryptophan synthase beta chain 2 (402 aa).

K97 is modified (N6-(pyridoxal phosphate)lysine).

It belongs to the TrpB family. Tetramer of two alpha and two beta chains. It depends on pyridoxal 5'-phosphate as a cofactor.

The enzyme catalyses (1S,2R)-1-C-(indol-3-yl)glycerol 3-phosphate + L-serine = D-glyceraldehyde 3-phosphate + L-tryptophan + H2O. The protein operates within amino-acid biosynthesis; L-tryptophan biosynthesis; L-tryptophan from chorismate: step 5/5. In terms of biological role, the beta subunit is responsible for the synthesis of L-tryptophan from indole and L-serine. This Wolinella succinogenes (strain ATCC 29543 / DSM 1740 / CCUG 13145 / JCM 31913 / LMG 7466 / NCTC 11488 / FDC 602W) (Vibrio succinogenes) protein is Tryptophan synthase beta chain 2 (trpB2).